The chain runs to 1872 residues: Histone acetyltransferase KAT6B (1872 aa).

The SAMD1-like winged helix (WH) domain maps to 1-77 (MVKLANPLYT…LASYKDPDNP (77 aa)). Disordered regions lie at residues 70 to 103 (SYKD…CNDL) and 168 to 207 (KEGP…HEKD). In terms of domain architecture, H15 spans 104 to 177 (RNVDWNKLLK…KEGPQYRVNS (74 aa)). Residues 189 to 202 (PSAFPSSLPPVSLL) are compositionally biased toward low complexity. PHD-type zinc fingers lie at residues 214–273 (IPIC…CKTC) and 270–321 (CKTC…CRPK). Residue S356 is modified to Phosphoserine. Residues 361 to 417 (EGSMSAFTGRGSPGRGQKTKVSTTPSSGHAASGKHSSSRLAVTDPTRPGATTKTTTS) are disordered. The interval 362–535 (GSMSAFTGRG…ECESGVEDCG (174 aa)) is negatively regulates HAT activity. A compositionally biased stretch (low complexity) spans 386–395 (SSGHAASGKH). Residue K491 forms a Glycyl lysine isopeptide (Lys-Gly) (interchain with G-Cter in SUMO2) linkage. One can recognise an MYST-type HAT domain in the interval 533–807 (DCGRYPSVIE…LDPESLRWTP (275 aa)). Positions 536–826 (RYPSVIEFGK…EEEREAEKEA (291 aa)) are catalytic. The segment at 566-591 (LYLCEFCLKYMKSKNILLRHSKKCGW) adopts a C2HC MYST-type zinc-finger fold. The interval 570-826 (EFCLKYMKSK…EEEREAEKEA (257 aa)) is interaction with BRPF1. K633 carries the post-translational modification N6-acetyllysine; by autocatalysis. Acetyl-CoA is bound by residues 674–678 (SCIMI) and 683–689 (QRQGFGR). The Proton donor/acceptor role is filled by E709. S713 provides a ligand contact to acetyl-CoA. Over residues 846-860 (SRVSSRQSSAKVQSK) the composition is skewed to low complexity. Disordered regions lie at residues 846 to 1018 (SRVS…NHFF), 1031 to 1252 (DAEH…FKDA), 1283 to 1358 (MSCN…DDTF), and 1388 to 1418 (DECQ…SPSV). N6-acetyllysine occurs at positions 856, 860, and 862. At S866 the chain carries Phosphoserine. Over residues 887–909 (SEEEEEEEEEDDEEEEEEEEEES) the composition is skewed to acidic residues. The span at 910-924 (IQTSPPRLTKPQSVS) shows a compositional bias: polar residues. A compositionally biased stretch (basic residues) spans 925–944 (IKRKRPFVVKKKRGRKRRRI). Residues 946 to 959 (SSVTTETISETTEV) are compositionally biased toward low complexity. Residues 991–1004 (PVLRKAFPHQPGKK) are compositionally biased toward basic residues. Composition is skewed to basic and acidic residues over residues 1031-1047 (DAEH…EPLK) and 1094-1114 (EEQK…REVT). The segment covering 1155–1176 (EEGEEEGEEEGEREEQEEEEEV) has biased composition (acidic residues). The span at 1177–1207 (TTEKDLDGAKSKENPEPEISMEKEDPVHLGD) shows a compositional bias: basic and acidic residues. Residues 1208 to 1217 (HEEDEDEEEE) are compositionally biased toward acidic residues. Basic and acidic residues-rich tracts occupy residues 1238–1252 (NMER…FKDA) and 1310–1320 (QTQKQDQKNSD). Residues 1339–1349 (ETAQAVQSLTQ) show a composition bias toward polar residues. Residues 1359 to 1872 (PDCAETQEAC…QSLNGSYMRR (514 aa)) form an interaction with RUNX1 and RUNX2 region. Over residues 1393–1410 (SDHSSPVSSVHSHPGQSV) the composition is skewed to low complexity.

Belongs to the MYST (SAS/MOZ) family. Component of the MOZ/MORF complex composed at least of ING5, KAT6A, KAT6B, MEAF6 and one of BRPF1, BRD1/BRPF2 and BRPF3. Interacts with RUNX1 and RUNX2. In terms of processing, autoacetylation at Lys-633 is required for proper function. In terms of tissue distribution, ubiquitously expressed.

It is found in the nucleus. The enzyme catalyses L-lysyl-[protein] + acetyl-CoA = N(6)-acetyl-L-lysyl-[protein] + CoA + H(+). Histone acetyltransferase which may be involved in both positive and negative regulation of transcription. Required for RUNX2-dependent transcriptional activation. Component of the MOZ/MORF complex which has a histone H3 acetyltransferase activity. Involved in cerebral cortex development. In Mus musculus (Mouse), this protein is Histone acetyltransferase KAT6B (Kat6b).